The sequence spans 169 residues: MTDTQNRVAMGYIKGVFGIKGWLKIAANTEYSDSLLDYPEWHLVKDGKTISVTLEAGKVVNGELQVKFEGINDRDLAFSLRGYTIEIPREAFAPTEEDEYYWTDLVGMTVVNKDHTVLGKVSNLMETGANDVLMIDGEHGQILIPFVSQYIETVDTGSKTITADWGLDY.

The region spanning 97 to 169 is the PRC barrel domain; sequence EDEYYWTDLV…TITADWGLDY (73 aa).

The protein belongs to the RimM family. Binds ribosomal protein uS19.

It is found in the cytoplasm. Functionally, an accessory protein needed during the final step in the assembly of 30S ribosomal subunit, possibly for assembly of the head region. Essential for efficient processing of 16S rRNA. May be needed both before and after RbfA during the maturation of 16S rRNA. It has affinity for free ribosomal 30S subunits but not for 70S ribosomes. The sequence is that of Ribosome maturation factor RimM from Neisseria meningitidis serogroup B (strain ATCC BAA-335 / MC58).